Here is a 445-residue protein sequence, read N- to C-terminus: Phosphoglucosamine mutase (445 aa).

Ser102 functions as the Phosphoserine intermediate in the catalytic mechanism. Mg(2+) contacts are provided by Ser102, Asp241, Asp243, and Asp245. Ser102 is subject to Phosphoserine.

The protein belongs to the phosphohexose mutase family. Mg(2+) is required as a cofactor. In terms of processing, activated by phosphorylation.

It catalyses the reaction alpha-D-glucosamine 1-phosphate = D-glucosamine 6-phosphate. Catalyzes the conversion of glucosamine-6-phosphate to glucosamine-1-phosphate. In Shewanella oneidensis (strain ATCC 700550 / JCM 31522 / CIP 106686 / LMG 19005 / NCIMB 14063 / MR-1), this protein is Phosphoglucosamine mutase.